Consider the following 123-residue polypeptide: Protein Wnt-3b (123 aa).

Residue serine 1 is the site of O-palmitoleoyl serine; by PORCN attachment. The cysteines at positions 89 and 104 are disulfide-linked. Asparagine 90 carries an N-linked (GlcNAc...) asparagine glycan.

The protein belongs to the Wnt family. In terms of processing, palmitoleoylation is required for efficient binding to frizzled receptors. Depalmitoleoylation leads to Wnt signaling pathway inhibition.

Its subcellular location is the secreted. The protein resides in the extracellular space. The protein localises to the extracellular matrix. In terms of biological role, ligand for members of the frizzled family of seven transmembrane receptors. Probable developmental protein. May be a signaling molecule which affects the development of discrete regions of tissues. Is likely to signal over only few cell diameters. This chain is Protein Wnt-3b (WNT-3B), found in Alopias vulpinus (Common thresher shark).